Here is a 2391-residue protein sequence, read N- to C-terminus: Filaggrin-2 (2391 aa).

Residues 1 to 81 (MTDLLRSVVT…TEFLLMIFKL (81 aa)) are S-100-like. EF-hand domains are found at residues 8–43 (VVTV…ELHP) and 49–84 (DDPD…LTMA). The Ca(2+) site is built by Asp-62, Asp-64, Asp-66, Arg-68, and Glu-73. 3 disordered regions span residues 96–275 (ASGS…DSGR), 349–369 (SYSQ…CGGQ), and 406–2391 (NSSS…LSRH). Positions 98-107 (GSKKHRRGHR) are enriched in basic residues. The segment covering 111-121 (EESETEEDEED) has biased composition (acidic residues). Residues 149 to 163 (GTVKCRHGSNSRRLG) show a composition bias toward basic residues. Over residues 166 to 176 (GNLSSSGNQEG) the composition is skewed to polar residues. The segment covering 193-209 (GKDRHGSSSVELRERIN) has biased composition (basic and acidic residues). A Filaggrin 1 repeat occupies 245–289 (ETSGHESNSTQSRIREQKLGSSCSGSGDSGRRSHACGYSNSSGCG). Composition is skewed to polar residues over residues 420–442 (GSGS…SSGF) and 449–476 (SGQT…SGKT). Residues 421–466 (SGSSQSTSFEQHGTGLSQSSGFEQHVCGSGQTCGQHESTSSQSLGY) form a Filaggrin 2 repeat. Positions 480–507 (GQHGSGSGQSSGFGQCGSGSGQSSGFGQ) are enriched in gly residues. Low complexity predominate over residues 508-562 (HGSVSGQSSGFGQHGSVSGQSSGFGQHESRSRQSSYGQHGSGSSQSSGYGQYGSR). Residues 568–604 (GQHGLGSGQSTGFGQYGSGSGQSSGFGQHGSGSGQSS) are compositionally biased toward gly residues. The segment covering 605 to 655 (GFGQHESRSGQSSYGQHSSGSSQSSGYGQHGSRQTSGFGQHGSGSSQSTGF) has biased composition (low complexity). The span at 656-666 (GQYGSGSGQSS) shows a compositional bias: gly residues. The segment covering 667 to 734 (GFGQHVSGSG…SSGQSSSFGQ (68 aa)) has biased composition (low complexity). Positions 735 to 756 (HGSGSGQSSGFGQHGSGSGQSS) are enriched in gly residues. A compositionally biased stretch (low complexity) spans 757–807 (GFGQHESRSGQSSYGQHSSGSSQSSGYGQHGSRQTSGFGQHGSGSSQSTGF). Over residues 808-831 (GQYGSGSGQSAGFGQHGSGSGQSS) the composition is skewed to gly residues. Residues 832 to 884 (GFGQHESRSHQSSYGQHGSGSSQSSGYGQHGSSSGQTSGFGQHRSSSGQYSGF) are compositionally biased toward low complexity. The segment covering 885 to 908 (GQHGSGSGQSSGFGQHGTGSGQYS) has biased composition (gly residues). A compositionally biased stretch (low complexity) spans 918 to 956 (HQSSYGQHGSGSSQSSGYGQHGSSSGQTFGFGQHRSGSG). Positions 957-972 (QSSGFGQHGSGSGQSS) are enriched in gly residues. Low complexity-rich tracts occupy residues 973-982 (GFGQHESGSG) and 994-1027 (SSQS…GFGQ). A Filaggrin 3 repeat occupies 1019–1051 (SGQTTGFGQHRSSSGQYSGFGQHGSGSDQSSGF). Residues 1052–1062 (GQHGTGSGQSS) show a composition bias toward gly residues. The span at 1063–1098 (GFGQYESRSRQSSYGQHGSGSSQSSGYGQHGSNSGQ) shows a compositional bias: low complexity. The stretch at 1097-1141 (GQTSGFGQHRPGSGQSSGFGQYGSGSGQSSGFGQHGSGTGKSSGF) is one Filaggrin 4 repeat. Over residues 1111–1137 (QSSGFGQYGSGSGQSSGFGQHGSGTGK) the composition is skewed to gly residues. Over residues 1148–1174 (SGQSSYGQHGTGSSQSSGCGQHESGSG) the composition is skewed to low complexity. The segment covering 1175-1198 (PTTSFGQHVSGSDNFSSSGQHISD) has biased composition (polar residues). Residues 1206–1220 (GQYGSGSGQSTGLGQ) show a composition bias toward gly residues. The span at 1226–1249 (VESGSTVHGRQETTHGQTINTTRH) shows a compositional bias: polar residues. Residues 1250–1263 (SQSGQGQSTQTGSR) show a composition bias toward low complexity. Ser-1276 bears the Phosphoserine mark. The span at 1329–1343 (HGQSTQTGSRTSGRQ) shows a compositional bias: polar residues. A compositionally biased stretch (basic and acidic residues) spans 1346–1355 (SHSDATDSEV). Residues 1366 to 1377 (QEQTHSQAGSQH) show a composition bias toward polar residues. A compositionally biased stretch (basic and acidic residues) spans 1378 to 1390 (GESESTVHERHET). Residues 1406 to 1416 (HGQSTQRGSRT) show a composition bias toward low complexity. 2 positions are modified to phosphoserine: Ser-1427 and Ser-1428. The segment covering 1439 to 1459 (RPQSQEQTHGQAGSQHGESGS) has biased composition (polar residues). One copy of the Filaggrin 5 repeat lies at 1455-1510 (GESGSTVHGRHGTTHGQTGDTTRHAHYHHGKSTQRGSSTTGRRGSGHSESSDSEVH). Residues 1487 to 1496 (TQRGSSTTGR) show a composition bias toward low complexity. Ser-1504 and Ser-1505 each carry phosphoserine. Residues 1510–1529 (HSGGSHTHSGHTHGQSGSQH) are compositionally biased toward low complexity. Positions 1544 to 1559 (HGQTGDTTRHSYSGHE) are enriched in polar residues. Low complexity predominate over residues 1560–1572 (QTTQTGSRTTGRQ). 2 stretches are compositionally biased toward basic and acidic residues: residues 1575–1584 (SHSESTDSEV) and 1605–1618 (QHEE…ERHG). The residue at position 1579 (Ser-1579) is a Phosphoserine. The Filaggrin 6 repeat unit spans residues 1607–1662 (EEPEFTVHERHGTTHGQIGDTTGHSHSGHGQSTQRGSRTTGRQRSSHSESSDSEVH). Residues 1627–1649 (TTGHSHSGHGQSTQRGSRTTGRQ) show a composition bias toward low complexity. The span at 1652–1661 (SHSESSDSEV) shows a compositional bias: basic and acidic residues. Phosphoserine occurs at positions 1656 and 1657. Low complexity-rich tracts occupy residues 1662-1686 (HSGV…QSES) and 1711-1720 (GLTTQTGSRT). Positions 1755 to 1768 (QHGESESIVHERHG) are enriched in basic and acidic residues. Residues 1757 to 1812 (GESESIVHERHGTIHGQTGDTTRHAHSGHGQSTQTGSRTTGRRSSGHSEYSDSEGH) form a Filaggrin 7 repeat. Over residues 1784–1795 (GHGQSTQTGSRT) the composition is skewed to low complexity. Ser-1800 and Ser-1807 each carry phosphoserine. Residues 1834–1845 (GESESIVDERHG) are compositionally biased toward basic and acidic residues. Positions 1849-1873 (GQTGDTSGHSQSGHGQSTQSGSSTT) are enriched in low complexity. Residues 1879–1888 (GHSESSDSEV) are compositionally biased toward basic and acidic residues. Ser-1883, Ser-1884, and Ser-1959 each carry phosphoserine. 2 Filaggrin repeats span residues 1928-1964 (DTTE…SEGP) and 1984-2039 (PESG…SEGH). Low complexity-rich tracts occupy residues 1963–1982 (GPSG…AGSH) and 2013–2022 (GQSTQRGSRT). Ser-2034 carries the phosphoserine modification. 3 stretches are compositionally biased toward low complexity: residues 2039 to 2059 (HSGV…SQHG), 2114 to 2125 (HSGVSHTHSGHT), and 2162 to 2176 (HGQS…TGRQ). One copy of the Filaggrin 10 repeat lies at 2134-2189 (GESGSAIHGRQGTIHGQTGDTTRHGQSGHGQSTQTGSRTTGRQRSSHSESSDSEVH). Over residues 2179-2190 (SHSESSDSEVHS) the composition is skewed to basic and acidic residues. Low complexity-rich tracts occupy residues 2201–2211 (HSQAGSRHGQS), 2219–2228 (QGTTHGQTGD), and 2238–2247 (GQSTQRGSRT). Residues 2273 to 2288 (GHIQGQAGSQQRQPGS) are compositionally biased toward polar residues. Residues 2320–2331 (SRSSRASHFQSH) are compositionally biased toward low complexity. Residues 2367-2391 (SRKSISNSHLSWSTDSTANKQLSRH) show a composition bias toward polar residues.

Belongs to the S100-fused protein family. This sequence in the N-terminal section; belongs to the S-100 family. In terms of processing, deiminated by PADI1, PADI2 or PADI3 in vitro. The deiminated form is degraded by calpain-1/CAPN1 more quickly and into shorter peptides than the intact protein. Post-translationally, may be processed by calpain-1/CAPN1 in the uppermost epidermal layers. In terms of tissue distribution, expressed in skin, thymus, stomach and placenta, but not detected in heart, brain, liver, lung, bone marrow, small intestine, spleen, prostate, colon, adrenal gland, kidney, pancreas, mammary gland, bladder, thyroid, salivary gland and trachea. Weakly expressed in esophagus, tonsils and testis (at protein level). In the skin, strongly expressed in the upper stratum granulosum and lower stratum corneum, but not detected in the upper stratum corneum (at protein level). In scalp hair follicles, mainly restricted within the granular and cornified cells surrounding the infundibular outer root sheath, with weak expression in central and proximal outer root sheath (at protein level). Tends to be down-regulated in sporiatic lesions compared to non-lesional skin inthe same patients.

It localises to the cytoplasm. It is found in the cytoplasmic granule. Functionally, essential for normal cell-cell adhesion in the cornified cell layers. Important for proper integrity and mechanical strength of the stratum corneum of the epidermis. This is Filaggrin-2 (FLG2) from Homo sapiens (Human).